Consider the following 196-residue polypeptide: Holliday junction branch migration complex subunit RuvA (196 aa).

Residues 1–64 (MIDRLRGQLV…EDAMLLFGFA (64 aa)) are domain I. The segment at 65-143 (TREEREAFDA…AAAGGGGGVA (79 aa)) is domain II. The interval 144–153 (AGEGDGPFME) is flexible linker. Residues 153–196 (EAREALTGLGYSLEEAERALRDVPPQETVEQYIKAALRKIGGRR) form a domain III region.

Belongs to the RuvA family. In terms of assembly, homotetramer. Forms an RuvA(8)-RuvB(12)-Holliday junction (HJ) complex. HJ DNA is sandwiched between 2 RuvA tetramers; dsDNA enters through RuvA and exits via RuvB. An RuvB hexamer assembles on each DNA strand where it exits the tetramer. Each RuvB hexamer is contacted by two RuvA subunits (via domain III) on 2 adjacent RuvB subunits; this complex drives branch migration. In the full resolvosome a probable DNA-RuvA(4)-RuvB(12)-RuvC(2) complex forms which resolves the HJ.

Its subcellular location is the cytoplasm. The RuvA-RuvB-RuvC complex processes Holliday junction (HJ) DNA during genetic recombination and DNA repair, while the RuvA-RuvB complex plays an important role in the rescue of blocked DNA replication forks via replication fork reversal (RFR). RuvA specifically binds to HJ cruciform DNA, conferring on it an open structure. The RuvB hexamer acts as an ATP-dependent pump, pulling dsDNA into and through the RuvAB complex. HJ branch migration allows RuvC to scan DNA until it finds its consensus sequence, where it cleaves and resolves the cruciform DNA. This Rubrobacter xylanophilus (strain DSM 9941 / JCM 11954 / NBRC 16129 / PRD-1) protein is Holliday junction branch migration complex subunit RuvA.